Reading from the N-terminus, the 119-residue chain is ARKHVQELLKTFRRIDFDETRKSVYLQSAKFGVQSQLREPLTKKVLNYWDDVKLSKTCLDRMVTKVNDVKETFYAGFSYACESHNQYSVDCLEAAKPSYLTALGEIRGETEKCLTTRLK.

Disulfide bonds link C58–C113 and C81–C91.

The protein localises to the secreted. With respect to regulation, the activity is increased in the presence of host properdin (CFP). Salivary protein that inhibits the alternative pathway of complement system activation in the host while having no inhibitory effect on the classical pathway. Inhibits activity of activated host C3-convertase complex C3bBb (C3-CFB). Enhances accumulation of C3bBb on immobilized properdin. The protein is gSG7 salivary protein of Anopheles freeborni (Western malaria mosquito).